The following is a 131-amino-acid chain: Large-conductance mechanosensitive channel (131 aa).

Transmembrane regions (helical) follow at residues phenylalanine 8–glycine 28, isoleucine 30–isoleucine 50, and glycine 67–valine 87.

Belongs to the MscL family. Homopentamer.

The protein resides in the cell membrane. Channel that opens in response to stretch forces in the membrane lipid bilayer. May participate in the regulation of osmotic pressure changes within the cell. This chain is Large-conductance mechanosensitive channel, found in Geobacillus thermodenitrificans (strain NG80-2).